Consider the following 130-residue polypeptide: S-protein homolog 32 (130 aa).

Residues 1 to 21 (MKYFTIFVFVFSLCMLGHVSG) form the signal peptide.

It belongs to the plant self-incompatibility (S1) protein family.

It is found in the secreted. The polypeptide is S-protein homolog 32 (Arabidopsis thaliana (Mouse-ear cress)).